The primary structure comprises 278 residues: Formamidopyrimidine-DNA glycosylase (278 aa).

The active-site Schiff-base intermediate with DNA is Pro2. Glu3 (proton donor) is an active-site residue. The active-site Proton donor; for beta-elimination activity is Lys59. Residues His94, Arg113, and Lys154 each coordinate DNA. Residues 239–273 (KVHTKKGEFCIKCSSKIEKIKFKGRGTYFCPTCQK) form an FPG-type zinc finger. The active-site Proton donor; for delta-elimination activity is the Arg263.

Belongs to the FPG family. In terms of assembly, monomer. Zn(2+) is required as a cofactor.

It carries out the reaction Hydrolysis of DNA containing ring-opened 7-methylguanine residues, releasing 2,6-diamino-4-hydroxy-5-(N-methyl)formamidopyrimidine.. It catalyses the reaction 2'-deoxyribonucleotide-(2'-deoxyribose 5'-phosphate)-2'-deoxyribonucleotide-DNA = a 3'-end 2'-deoxyribonucleotide-(2,3-dehydro-2,3-deoxyribose 5'-phosphate)-DNA + a 5'-end 5'-phospho-2'-deoxyribonucleoside-DNA + H(+). Functionally, involved in base excision repair of DNA damaged by oxidation or by mutagenic agents. Acts as a DNA glycosylase that recognizes and removes damaged bases. Has a preference for oxidized purines, such as 7,8-dihydro-8-oxoguanine (8-oxoG). Has AP (apurinic/apyrimidinic) lyase activity and introduces nicks in the DNA strand. Cleaves the DNA backbone by beta-delta elimination to generate a single-strand break at the site of the removed base with both 3'- and 5'-phosphates. This is Formamidopyrimidine-DNA glycosylase (mutM) from Mycoplasmopsis pulmonis (strain UAB CTIP) (Mycoplasma pulmonis).